A 638-amino-acid chain; its full sequence is Plasma kallikrein (638 aa).

Residues 1–19 (MILFKQVGYFVSLFATVSC) form the signal peptide. 4 consecutive Apple domains span residues 21 to 104 (CLSQ…LKQC), 111 to 194 (CHQD…LKSC), 201 to 284 (CPMD…LFTC), and 292 to 375 (CHFK…LRLC). 18 disulfides stabilise this stretch: cysteine 21–cysteine 104, cysteine 47–cysteine 77, cysteine 51–cysteine 57, cysteine 111–cysteine 194, cysteine 137–cysteine 166, cysteine 141–cysteine 147, cysteine 201–cysteine 284, cysteine 227–cysteine 256, cysteine 231–cysteine 237, cysteine 292–cysteine 375, cysteine 318–cysteine 347, cysteine 322–cysteine 328, cysteine 340–cysteine 345, cysteine 383–cysteine 503, cysteine 419–cysteine 435, cysteine 517–cysteine 584, cysteine 548–cysteine 563, and cysteine 574–cysteine 602. N-linked (GlcNAc...) asparagine glycosylation is present at asparagine 127. An N-linked (GlcNAc...) asparagine glycan is attached at asparagine 215. N-linked (GlcNAc...) asparagine glycosylation is present at asparagine 308. The Peptidase S1 domain occupies 391-626 (IVGGTNSSLG…YIDWILEKIQ (236 aa)). Asparagine 396 carries N-linked (GlcNAc...) asparagine glycosylation. Residue histidine 434 is the Charge relay system of the active site. N-linked (GlcNAc...) asparagine glycosylation occurs at asparagine 453. The active-site Charge relay system is aspartate 483. N-linked (GlcNAc...) asparagine glycosylation is present at asparagine 494. The active-site Charge relay system is the serine 578.

This sequence belongs to the peptidase S1 family. Plasma kallikrein subfamily. In terms of assembly, forms a heterodimer with SERPINA5. The zymogen is activated by factor XIIa, which cleaves the molecule into a light chain, which contains the active site, and a heavy chain, which associates with HMW kininogen. These chains are linked by one or more disulfide bonds.

It localises to the secreted. The enzyme catalyses Cleaves selectively Arg-|-Xaa and Lys-|-Xaa bonds, including Lys-|-Arg and Arg-|-Ser bonds in (human) kininogen to release bradykinin.. Its activity is regulated as follows. Inhibited by SERPINA5. Its function is as follows. The enzyme cleaves Lys-Arg and Arg-Ser bonds. It activates, in a reciprocal reaction, factor XII after its binding to a negatively charged surface. It also releases bradykinin from HMW kininogen and may also play a role in the renin-angiotensin system by converting prorenin into renin. This chain is Plasma kallikrein (Klkb1), found in Rattus norvegicus (Rat).